Here is a 96-residue protein sequence, read N- to C-terminus: MAKGQSLQDPYLNALRRERIPVSIYLVNGIKLQGQIESFDQFVILLKNTVNQMVYKHAISTVVPARSVSHHNNPQQQQQHSQQTESAAPAAEPQAE.

One can recognise a Sm domain in the interval 9–68; sequence DPYLNALRRERIPVSIYLVNGIKLQGQIESFDQFVILLKNTVNQMVYKHAISTVVPARSV. Positions 65–96 are disordered; it reads ARSVSHHNNPQQQQQHSQQTESAAPAAEPQAE. Residues 70–96 are compositionally biased toward low complexity; it reads HHNNPQQQQQHSQQTESAAPAAEPQAE.

This sequence belongs to the Hfq family. As to quaternary structure, homohexamer.

Functionally, RNA chaperone that binds small regulatory RNA (sRNAs) and mRNAs to facilitate mRNA translational regulation in response to envelope stress, environmental stress and changes in metabolite concentrations. Also binds with high specificity to tRNAs. In Mannheimia succiniciproducens (strain KCTC 0769BP / MBEL55E), this protein is RNA-binding protein Hfq.